The sequence spans 528 residues: MAIVDTAIDGINYFLSLSLTQQITILVVFPFIYNIAWQLLYSLRKDRVPMVFYWIPWFGSAASYGMQPYEFFEKCRLKYGDVFSFMLLGKVMTVYLGPKGHEFIYNAKLSDVSAEEAYTHLTTPVFGKGVIYDCPNSRLMEQKKFAKFALTTDSFKTYVPKIREEVLNYFVNDVSFKTKERDHGVASVMKTQPEITIFTASRCLFGDEMRKSFDRSFAQLYADLDKGFTPINFVFPNLPLPHYWRRDAAQRKISAHYMKEIKRRRESGDIDPKRDLIDSLLVNSTYKDGVKMTDQEIANLLIGVLMGGQHTSASTSAWFLLHLAEQPQLQDDLYEELTNLLKEKGGDLNDLTYEDLQKLPLVNNTIKETLRMHMPLHSIFRKVMNPLRVPNTKYVIPKGHYVLVSAGYAHTSDRWFEHPEHFNPRRWESDDTKASAVSFNSEDTVDYGFGKISKGVSSPYLPFGGGRHRCIGEQFAYVQLGTILTTYIYNFKWRLNGDKVPDVDYQSMVTLPLEPAEIVWEKRDTCMV.

Heme is bound at residue cysteine 470.

Belongs to the cytochrome P450 family. Heme is required as a cofactor.

It localises to the membrane. It carries out the reaction a 14alpha-methyl steroid + 3 reduced [NADPH--hemoprotein reductase] + 3 O2 = a Delta(14) steroid + formate + 3 oxidized [NADPH--hemoprotein reductase] + 4 H2O + 4 H(+). The catalysed reaction is a 14alpha-methyl steroid + reduced [NADPH--hemoprotein reductase] + O2 = a 14alpha-hydroxymethyl steroid + oxidized [NADPH--hemoprotein reductase] + H2O + H(+). It catalyses the reaction a 14alpha-hydroxymethyl steroid + reduced [NADPH--hemoprotein reductase] + O2 = a 14alpha-formyl steroid + oxidized [NADPH--hemoprotein reductase] + 2 H2O + H(+). The enzyme catalyses a 14alpha-formyl steroid + reduced [NADPH--hemoprotein reductase] + O2 = a Delta(14) steroid + formate + oxidized [NADPH--hemoprotein reductase] + H2O + 2 H(+). It carries out the reaction lanosterol + 3 reduced [NADPH--hemoprotein reductase] + 3 O2 = 4,4-dimethyl-5alpha-cholesta-8,14,24-trien-3beta-ol + formate + 3 oxidized [NADPH--hemoprotein reductase] + 4 H2O + 4 H(+). The catalysed reaction is lanosterol + reduced [NADPH--hemoprotein reductase] + O2 = 32-hydroxylanosterol + oxidized [NADPH--hemoprotein reductase] + H2O + H(+). It catalyses the reaction 32-hydroxylanosterol + reduced [NADPH--hemoprotein reductase] + O2 = 32-oxolanosterol + oxidized [NADPH--hemoprotein reductase] + 2 H2O + H(+). The enzyme catalyses 32-oxolanosterol + reduced [NADPH--hemoprotein reductase] + O2 = 4,4-dimethyl-5alpha-cholesta-8,14,24-trien-3beta-ol + formate + oxidized [NADPH--hemoprotein reductase] + H2O + 2 H(+). It carries out the reaction eburicol + 3 reduced [NADPH--hemoprotein reductase] + 3 O2 = 14-demethyleburicol + formate + 3 oxidized [NADPH--hemoprotein reductase] + 4 H2O + 4 H(+). The catalysed reaction is eburicol + reduced [NADPH--hemoprotein reductase] + O2 = 32-hydroxyeburicol + oxidized [NADPH--hemoprotein reductase] + H2O + H(+). It catalyses the reaction 32-hydroxyeburicol + reduced [NADPH--hemoprotein reductase] + O2 = 32-oxoeburicol + oxidized [NADPH--hemoprotein reductase] + 2 H2O + H(+). The enzyme catalyses 32-oxoeburicol + reduced [NADPH--hemoprotein reductase] + O2 = 14-demethyleburicol + formate + oxidized [NADPH--hemoprotein reductase] + H2O + 2 H(+). The protein operates within steroid biosynthesis; zymosterol biosynthesis; zymosterol from lanosterol: step 1/6. Sterol 14alpha-demethylase that plays a critical role in the third module of ergosterol biosynthesis pathway, being ergosterol the major sterol component in fungal membranes that participates in a variety of functions. The third module or late pathway involves the ergosterol synthesis itself through consecutive reactions that mainly occur in the endoplasmic reticulum (ER) membrane. In filamentous fungi, during the initial step of this module, lanosterol (lanosta-8,24-dien-3beta-ol) can be metabolized to eburicol. Sterol 14alpha-demethylase catalyzes the three-step oxidative removal of the 14alpha-methyl group (C-32) of both these sterols in the form of formate, and converts eburicol and lanosterol to 14-demethyleburicol (4,4,24-trimethylergosta-8,14,24(28)-trienol) and 4,4-dimethyl-5alpha-cholesta-8,14,24-trien-3beta-ol, respectively, which are further metabolized by other enzymes in the pathway to ergosterol. Can also use substrates not intrinsic to fungi, such as 24,25-dihydrolanosterol (DHL), producing 4,4-dimethyl-8,14-cholestadien-3-beta-ol, but at lower rates than the endogenous substrates. This Candida tropicalis (Yeast) protein is Lanosterol 14-alpha demethylase (ERG11).